A 162-amino-acid chain; its full sequence is Selenoprotein F (162 aa).

The N-terminal stretch at Met-1–Ala-28 is a signal peptide. Sec-93 is a non-standard amino acid (selenocysteine).

The protein belongs to the selenoprotein M/F family. In terms of assembly, forms a tight complex with UGGT1/UGCGL1. Interacts with UGGT2/UGCGL2. Interacts with RDH11.

The protein resides in the endoplasmic reticulum lumen. In terms of biological role, may be involved in redox reactions associated with the formation of disulfide bonds. May contribute to the quality control of protein folding in the endoplasmic reticulum. May regulate protein folding by enhancing the catalytic activity of UGGT1/UGCGL1 and UGGT2/UGCGL2. In Sus scrofa (Pig), this protein is Selenoprotein F.